The chain runs to 894 residues: Alanine--tRNA ligase (894 aa).

Histidine 587, histidine 591, cysteine 691, and histidine 695 together coordinate Zn(2+). The disordered stretch occupies residues 739–758 (AEGDRAAEEAKGRLQEERDA).

This sequence belongs to the class-II aminoacyl-tRNA synthetase family. It depends on Zn(2+) as a cofactor.

The protein localises to the cytoplasm. It carries out the reaction tRNA(Ala) + L-alanine + ATP = L-alanyl-tRNA(Ala) + AMP + diphosphate. In terms of biological role, catalyzes the attachment of alanine to tRNA(Ala) in a two-step reaction: alanine is first activated by ATP to form Ala-AMP and then transferred to the acceptor end of tRNA(Ala). Also edits incorrectly charged Ser-tRNA(Ala) and Gly-tRNA(Ala) via its editing domain. In Cenarchaeum symbiosum (strain A), this protein is Alanine--tRNA ligase.